Consider the following 711-residue polypeptide: Polyribonucleotide nucleotidyltransferase (711 aa).

Asp486 and Asp492 together coordinate Mg(2+). Positions 553–612 (PRIHTIKINPDKIKDVIGKGGSVIRALTEETGTTIEIEDDGTVKIAATDGEKAKHAIRRI) constitute a KH domain. The region spanning 622–690 (GRVYTGKVTR…RQGRIRLSIK (69 aa)) is the S1 motif domain. The interval 689–711 (IKEATEQSQPAAAPEAPAAEQGE) is disordered. A compositionally biased stretch (low complexity) spans 694–711 (EQSQPAAAPEAPAAEQGE).

The protein belongs to the polyribonucleotide nucleotidyltransferase family. Component of the RNA degradosome, which is a multiprotein complex involved in RNA processing and mRNA degradation. Mg(2+) is required as a cofactor.

It localises to the cytoplasm. It carries out the reaction RNA(n+1) + phosphate = RNA(n) + a ribonucleoside 5'-diphosphate. Its function is as follows. Involved in mRNA degradation. Catalyzes the phosphorolysis of single-stranded polyribonucleotides processively in the 3'- to 5'-direction. This chain is Polyribonucleotide nucleotidyltransferase, found in Escherichia coli (strain ATCC 8739 / DSM 1576 / NBRC 3972 / NCIMB 8545 / WDCM 00012 / Crooks).